The chain runs to 196 residues: Carnitine operon protein CaiE (196 aa).

The disordered stretch occupies residues 173 to 196; that stretch reads TQPLRQMEENRPRLQGTTDVTPKR. Residues 187–196 are compositionally biased toward polar residues; that stretch reads QGTTDVTPKR.

Belongs to the transferase hexapeptide repeat family.

The protein operates within amine and polyamine metabolism; carnitine metabolism. In terms of biological role, overproduction of CaiE stimulates the activity of CaiB and CaiD. The protein is Carnitine operon protein CaiE of Escherichia coli O139:H28 (strain E24377A / ETEC).